A 350-amino-acid polypeptide reads, in one-letter code: S-adenosylmethionine:tRNA ribosyltransferase-isomerase (350 aa).

It belongs to the QueA family. Monomer.

The protein localises to the cytoplasm. The enzyme catalyses 7-aminomethyl-7-carbaguanosine(34) in tRNA + S-adenosyl-L-methionine = epoxyqueuosine(34) in tRNA + adenine + L-methionine + 2 H(+). Its pathway is tRNA modification; tRNA-queuosine biosynthesis. Its function is as follows. Transfers and isomerizes the ribose moiety from AdoMet to the 7-aminomethyl group of 7-deazaguanine (preQ1-tRNA) to give epoxyqueuosine (oQ-tRNA). The chain is S-adenosylmethionine:tRNA ribosyltransferase-isomerase from Aliivibrio salmonicida (strain LFI1238) (Vibrio salmonicida (strain LFI1238)).